The chain runs to 419 residues: Enolase (419 aa).

Residue glutamine 161 coordinates (2R)-2-phosphoglycerate. Glutamate 205 acts as the Proton donor in catalysis. Aspartate 240, glutamate 283, and aspartate 309 together coordinate Mg(2+). Positions 334, 363, 364, and 385 each coordinate (2R)-2-phosphoglycerate. The active-site Proton acceptor is lysine 334.

This sequence belongs to the enolase family. Mg(2+) is required as a cofactor.

It is found in the cytoplasm. The protein resides in the secreted. Its subcellular location is the cell surface. The enzyme catalyses (2R)-2-phosphoglycerate = phosphoenolpyruvate + H2O. The protein operates within carbohydrate degradation; glycolysis; pyruvate from D-glyceraldehyde 3-phosphate: step 4/5. Its function is as follows. Catalyzes the reversible conversion of 2-phosphoglycerate (2-PG) into phosphoenolpyruvate (PEP). It is essential for the degradation of carbohydrates via glycolysis. In Saccharolobus islandicus (strain Y.N.15.51 / Yellowstone #2) (Sulfolobus islandicus), this protein is Enolase.